A 452-amino-acid polypeptide reads, in one-letter code: Bifunctional protein GlmU (452 aa).

Residues 1–231 (MSRTCLAVIL…EAELAGCNNR (231 aa)) are pyrophosphorylase. Residues 10–13 (LAAG), lysine 24, glutamine 77, 82–83 (GT), 105–107 (YGD), glycine 143, glutamate 157, asparagine 172, and asparagine 229 each bind UDP-N-acetyl-alpha-D-glucosamine. Residue aspartate 107 participates in Mg(2+) binding. Asparagine 229 contributes to the Mg(2+) binding site. The linker stretch occupies residues 232–252 (AELAVIEKLWQERRRHELMLS). The segment at 253 to 452 (GVSMIAPETV…MAIKAFSGKV (200 aa)) is N-acetyltransferase. The UDP-N-acetyl-alpha-D-glucosamine site is built by arginine 318 and lysine 336. Histidine 348 functions as the Proton acceptor in the catalytic mechanism. The UDP-N-acetyl-alpha-D-glucosamine site is built by tyrosine 351 and asparagine 362. Acetyl-CoA contacts are provided by residues alanine 365, 371-372 (NY), serine 390, serine 408, and arginine 425.

In the N-terminal section; belongs to the N-acetylglucosamine-1-phosphate uridyltransferase family. It in the C-terminal section; belongs to the transferase hexapeptide repeat family. Homotrimer. Mg(2+) serves as cofactor.

Its subcellular location is the cytoplasm. It catalyses the reaction alpha-D-glucosamine 1-phosphate + acetyl-CoA = N-acetyl-alpha-D-glucosamine 1-phosphate + CoA + H(+). It carries out the reaction N-acetyl-alpha-D-glucosamine 1-phosphate + UTP + H(+) = UDP-N-acetyl-alpha-D-glucosamine + diphosphate. The protein operates within nucleotide-sugar biosynthesis; UDP-N-acetyl-alpha-D-glucosamine biosynthesis; N-acetyl-alpha-D-glucosamine 1-phosphate from alpha-D-glucosamine 6-phosphate (route II): step 2/2. It functions in the pathway nucleotide-sugar biosynthesis; UDP-N-acetyl-alpha-D-glucosamine biosynthesis; UDP-N-acetyl-alpha-D-glucosamine from N-acetyl-alpha-D-glucosamine 1-phosphate: step 1/1. Its pathway is bacterial outer membrane biogenesis; LPS lipid A biosynthesis. In terms of biological role, catalyzes the last two sequential reactions in the de novo biosynthetic pathway for UDP-N-acetylglucosamine (UDP-GlcNAc). The C-terminal domain catalyzes the transfer of acetyl group from acetyl coenzyme A to glucosamine-1-phosphate (GlcN-1-P) to produce N-acetylglucosamine-1-phosphate (GlcNAc-1-P), which is converted into UDP-GlcNAc by the transfer of uridine 5-monophosphate (from uridine 5-triphosphate), a reaction catalyzed by the N-terminal domain. This chain is Bifunctional protein GlmU, found in Allorhizobium ampelinum (strain ATCC BAA-846 / DSM 112012 / S4) (Agrobacterium vitis (strain S4)).